We begin with the raw amino-acid sequence, 98 residues long: NADH-ubiquinone oxidoreductase chain 4L (98 aa).

3 helical membrane passes run 1 to 21, 29 to 49, and 61 to 81; these read MSMV…GLLV, SLLC…MAIL, and IILL…LVMV.

The protein belongs to the complex I subunit 4L family. In terms of assembly, core subunit of respiratory chain NADH dehydrogenase (Complex I) which is composed of 45 different subunits.

The protein localises to the mitochondrion inner membrane. It carries out the reaction a ubiquinone + NADH + 5 H(+)(in) = a ubiquinol + NAD(+) + 4 H(+)(out). Core subunit of the mitochondrial membrane respiratory chain NADH dehydrogenase (Complex I) which catalyzes electron transfer from NADH through the respiratory chain, using ubiquinone as an electron acceptor. Part of the enzyme membrane arm which is embedded in the lipid bilayer and involved in proton translocation. The polypeptide is NADH-ubiquinone oxidoreductase chain 4L (MT-ND4L) (Lynx canadensis (Canada lynx)).